The primary structure comprises 180 residues: uncharacterized protein (180 aa).

Belongs to the isochorismatase family.

This is an uncharacterized protein from Bacillus subtilis (strain 168).